A 457-amino-acid polypeptide reads, in one-letter code: uncharacterized protein (457 aa).

The TRAM domain maps to 6–64 (PVHKGEVLDVTIMDLTYQGMGVAKVDNYPIFIENALPEEKITVKVTKTTKNFAFGDVEK). Residues glutamine 287, tyrosine 316, glutamate 337, and aspartate 385 each coordinate S-adenosyl-L-methionine. Catalysis depends on cysteine 412, which acts as the Nucleophile.

This sequence belongs to the class I-like SAM-binding methyltransferase superfamily. RNA M5U methyltransferase family.

This is an uncharacterized protein from Lactiplantibacillus plantarum (strain ATCC BAA-793 / NCIMB 8826 / WCFS1) (Lactobacillus plantarum).